A 575-amino-acid polypeptide reads, in one-letter code: Amino-acid acetyltransferase, mitochondrial (575 aa).

The N-terminal 35 residues, 1–35 (MSKLRNLNRQFISNLKTHETVTNAKRNLILSILKS), are a transit peptide targeting the mitochondrion. An N-acetyltransferase domain is found at 398–557 (FTLNNLVQDG…QGIPGGVNIH (160 aa)).

It belongs to the acetyltransferase family.

The protein localises to the mitochondrion. It carries out the reaction L-glutamate + acetyl-CoA = N-acetyl-L-glutamate + CoA + H(+). The protein operates within amino-acid biosynthesis; L-arginine biosynthesis; N(2)-acetyl-L-ornithine from L-glutamate: step 1/4. N-acetylglutamate synthase involved in arginine biosynthesis. This is Amino-acid acetyltransferase, mitochondrial (ARG2) from Debaryomyces hansenii (strain ATCC 36239 / CBS 767 / BCRC 21394 / JCM 1990 / NBRC 0083 / IGC 2968) (Yeast).